The sequence spans 239 residues: 1-(5-phosphoribosyl)-5-[(5-phosphoribosylamino)methylideneamino] imidazole-4-carboxamide isomerase (239 aa).

The active-site Proton acceptor is Asp8. The active-site Proton donor is the Asp129.

Belongs to the HisA/HisF family.

The protein localises to the cytoplasm. It carries out the reaction 1-(5-phospho-beta-D-ribosyl)-5-[(5-phospho-beta-D-ribosylamino)methylideneamino]imidazole-4-carboxamide = 5-[(5-phospho-1-deoxy-D-ribulos-1-ylimino)methylamino]-1-(5-phospho-beta-D-ribosyl)imidazole-4-carboxamide. It functions in the pathway amino-acid biosynthesis; L-histidine biosynthesis; L-histidine from 5-phospho-alpha-D-ribose 1-diphosphate: step 4/9. The polypeptide is 1-(5-phosphoribosyl)-5-[(5-phosphoribosylamino)methylideneamino] imidazole-4-carboxamide isomerase (Roseobacter denitrificans (strain ATCC 33942 / OCh 114) (Erythrobacter sp. (strain OCh 114))).